The chain runs to 445 residues: MADRNEQILTPSQLNSLARDLLEGGFPLVWVEAELSSVTRPASGHLYFTLKDARAQIRCAMFKPKSTWLKFQPREGLRVLARGRLTLYEARGDYQLVLDHMEEAGEGALRRAFDELRARLTAEGLFDAERKQALPAHVRRLAVITSPSGAAVRDVLSVLARRFPLLEVDLLPSLVQGDSAAAQITSLLQRADASGRYDVILITRGGGSLEDLWAFNDERLARAIAAAQTPVVSAVGHETDFSLSDFVADVRAPTPSVAAELLVPDQRELVARVRRAQARMTQLQQHALGNAMQRADRLALRLRAQSPQARLQLLHRRQEDAGRQLRARMMHVLERLQARVQRGQAQLQSHNPQRHLAGLQQRLRALHPQAAMQRRLQHDQLQLRRIARSLEAVSPLATVARGYAIVTRPANGSVVRSAAEVVTGERLRAQLADGSIEVRVESGES.

It belongs to the XseA family. In terms of assembly, heterooligomer composed of large and small subunits.

It is found in the cytoplasm. The catalysed reaction is Exonucleolytic cleavage in either 5'- to 3'- or 3'- to 5'-direction to yield nucleoside 5'-phosphates.. Its function is as follows. Bidirectionally degrades single-stranded DNA into large acid-insoluble oligonucleotides, which are then degraded further into small acid-soluble oligonucleotides. This is Exodeoxyribonuclease 7 large subunit from Xanthomonas axonopodis pv. citri (strain 306).